The sequence spans 215 residues: Meiotic chromosome segregation protein P8B7.28c (215 aa).

The segment at 159–202 (TINSEYADDVSDNTDEERTESKGQQESNSAEEYDDDDSDEDRME) is disordered. Acidic residues-rich tracts occupy residues 164 to 176 (YADD…DEER) and 187 to 201 (SAEE…EDRM).

The protein resides in the nucleus. The protein localises to the nucleolus. In terms of biological role, required for meiotic chromosome segregation. The chain is Meiotic chromosome segregation protein P8B7.28c from Schizosaccharomyces pombe (strain 972 / ATCC 24843) (Fission yeast).